The chain runs to 257 residues: Staphylococcal secretory antigen SsaA (257 aa).

A signal peptide spans 1 to 26 (MKKIATATIATAGIATFAFAHHDAQA). 8 tandem repeats follow at residues 73-75 (YNN), 76-78 (YNN), 84-86 (YNN), 87-89 (YSN), 90-92 (YNN), 93-95 (YSN), 96-98 (YNN), and 99-101 (YNN). Residues 73–101 (YNNYNNYNYYGYNNYSNYNNYSNYNNYNN) form an 8 X 3 AA repeats of Y-[NS]-N region. Residues 101–144 (NYQSNNTQSQRTTQPTGGLGASYSTSSSNVHVTTTSAPSSNGVS) are disordered. The span at 107 to 116 (TQSQRTTQPT) shows a compositional bias: polar residues. The span at 122–136 (SYSTSSSNVHVTTTS) shows a compositional bias: low complexity. Positions 136–257 (SAPSSNGVSL…SQAASYNYIH (122 aa)) constitute a Peptidase C51 domain.

Its subcellular location is the secreted. Functionally, not known; immunogenic protein expressed during sepsis and particularly during episodes of infective endocarditis. This Staphylococcus epidermidis protein is Staphylococcal secretory antigen SsaA (ssaA).